The following is an 82-amino-acid chain: Fibroblast growth factor 8 (82 aa).

Residue asparagine 68 is glycosylated (N-linked (GlcNAc...) asparagine).

The protein belongs to the heparin-binding growth factors family. Monomer. Homodimer. Interacts with FGFR1, FGFR2, FGFR3 and FGFR4. Affinity between fibroblast growth factors (FGFs) and their receptors is increased by heparan sulfate glycosaminoglycans that function as coreceptors.

Its subcellular location is the secreted. Its function is as follows. Plays an important role in the regulation of embryonic development, cell proliferation, cell differentiation and cell migration. Required for normal brain, eye, ear and limb development during embryogenesis. Required for normal development of the gonadotropin-releasing hormone (GnRH) neuronal system. Plays a role in neurite outgrowth in hippocampal cells. In Canis lupus familiaris (Dog), this protein is Fibroblast growth factor 8 (FGF8).